Reading from the N-terminus, the 91-residue chain is Large ribosomal subunit protein bL27 (91 aa).

The disordered stretch occupies residues 1-21; that stretch reads MAHKKSGGSSRNGRDSAGRRL.

This sequence belongs to the bacterial ribosomal protein bL27 family.

The protein is Large ribosomal subunit protein bL27 of Phenylobacterium zucineum (strain HLK1).